A 91-amino-acid chain; its full sequence is Lipolysis-activating peptide 1-alpha chain (91 aa).

The signal sequence occupies residues 1–22; the sequence is MMKLVLFGIIVILFSLIGSIHG. The LCN-type CS-alpha/beta domain maps to 24–87; sequence SGNYPLNPYG…VWNAVKKHCK (64 aa). 3 cysteine pairs are disulfide-bonded: cysteine 38/cysteine 61, cysteine 47/cysteine 66, and cysteine 51/cysteine 68.

It belongs to the long (3 C-C) scorpion toxin superfamily. Monomer (edited version) and heterodimer (non-edited version) of this alpha chain and a beta chain (AC P84809). Expressed by the venom gland.

It is found in the secreted. Functionally, the heterodimer non-edited LVP1 induces lipolysis in rat adipocytes. Induction of lipolysis by LVP1 appears to be mediated through the beta-2 adrenergic receptor pathway (ADRB2). Intracerebroventricular injection is not toxic to mice. The edited BmKBTx-like, similar to beta-toxins, may modulate voltage-gated sodium channels (Nav) and may block voltage-gated potassium channels (Kv). The protein is Lipolysis-activating peptide 1-alpha chain of Buthus occitanus tunetanus (Common European scorpion).